The chain runs to 1014 residues: Latrophilin-like protein 1 (1014 aa).

Residues 1–27 (MRRNKTTYSLLQTILVACLLTVTPTFA) form the signal peptide. The N-linked (GlcNAc...) asparagine glycan is linked to N4. The Extracellular portion of the chain corresponds to 28–555 (SNKPTTDESG…IDQTLLTLLT (528 aa)). Residues 43-134 (ICDGEAAELS…KYLEVKYNCV (92 aa)) form the SUEL-type lectin domain. One can recognise a GAIN-B domain in the interval 359 to 542 (ESNVIVQPAI…AVLMDVRGHD (184 aa)). Residues N473 and N518 are each glycosylated (N-linked (GlcNAc...) asparagine). Cystine bridges form between C497/C524 and C512/C526. The tract at residues 497-542 (CVWWNHHELKWKPSGCKLSYHNKTMTSCDCTHLTHFAVLMDVRGHD) is GPS. Residues 556-576 (YVGCIISIICLLLTFFAYLIF) form a helical membrane-spanning segment. The Cytoplasmic segment spans residues 577–584 (SRNGGDRV). A helical transmembrane segment spans residues 585-605 (FIHENLCLSLAIAEITFLAGI). Residues 606 to 613 (TRTEDSLQ) are Extracellular-facing. Residues 614–634 (CGIIAVALMYMFLSALTWMLL) form a helical membrane-spanning segment. The Cytoplasmic segment spans residues 635–653 (EGYHIHRMLTEVFPSDPRR). The chain crosses the membrane as a helical span at residues 654–674 (FTYLLVGYIPPAIITLVAYLY). The Extracellular segment spans residues 675–692 (NSDGFGTPDHCWLSTQNN). The helical transmembrane segment at 693–713 (FIWFFAGPACFIFCANSLVLV) threads the bilayer. Residues 714–745 (KTLCTVYQHTSGGYLPCRHDVDSGRSIRNWVK) are Cytoplasmic-facing. Residues 746 to 766 (GSLALASLLGVTWIFGLFWVE) traverse the membrane as a helical segment. The Extracellular portion of the chain corresponds to 767–770 (DSRS). The helical transmembrane segment at 771–791 (IVMAYVFTISNSLQGLFIFLF) threads the bilayer. Residues 792–1014 (HVVFAEKMRK…NKPSMYCQDL (223 aa)) are Cytoplasmic-facing. Disordered stretches follow at residues 814 to 833 (GSSN…DLMS) and 932 to 994 (YQGW…EVTP). Over residues 941 to 952 (PEFSPPPPPLST) the composition is skewed to pro residues. Positions 965–986 (SGRRPPSSKMSDDSAYSDGSSS) are enriched in low complexity.

The protein belongs to the G-protein coupled receptor 2 family. LN-TM7 subfamily. As to quaternary structure, monomer and homodimer. Autoproteolytically processed at the GPS region of the GAIN-B domain; this cleavage modulates receptor activity. As to expression, expressed in epidermal precursor cells and pharyngeal primordium. In adults expression is seen in pharyngeal muscle cells and nervous system, the nerve ring, the gonad, and the vulva.

The protein localises to the cell membrane. Functionally, has a role in the establishment of anterior-posterior polarity in tissues during embryogenesis. Required for the alignment of the mitotic spindles and division planes. May have a role in cell death events. Required for normal defection and oocyte fertilization. Involved in sperm function. Operates in pharyngeal pumping during feeding. The protein is Latrophilin-like protein 1 of Caenorhabditis elegans.